Consider the following 358-residue polypeptide: Methylthioribose-1-phosphate isomerase (358 aa).

Substrate is bound by residues 54–56 (RGA), Arg96, and Gln205. The active-site Proton donor is Asp246. A substrate-binding site is contributed by 256–257 (NK).

It belongs to the eIF-2B alpha/beta/delta subunits family. MtnA subfamily.

The enzyme catalyses 5-(methylsulfanyl)-alpha-D-ribose 1-phosphate = 5-(methylsulfanyl)-D-ribulose 1-phosphate. Its pathway is amino-acid biosynthesis; L-methionine biosynthesis via salvage pathway; L-methionine from S-methyl-5-thio-alpha-D-ribose 1-phosphate: step 1/6. In terms of biological role, catalyzes the interconversion of methylthioribose-1-phosphate (MTR-1-P) into methylthioribulose-1-phosphate (MTRu-1-P). In Pseudomonas syringae pv. syringae (strain B728a), this protein is Methylthioribose-1-phosphate isomerase.